Here is a 386-residue protein sequence, read N- to C-terminus: MTLDDSSLQKFGFIKRETLGSINIDPLQTGGLLTGAAKQALVEWGDGYSVCDFCGGVLDLVKKPPIHDFVHKALPEFLGCDEARVTNGARESKFAVMHSMGKPGDWVVLDGLAHYSSYVAAERAGLNIEVVPHAGSPEYHLDPGRYGKAIEEVTKENGKPPVLALVTYPDGSYGNIPDAAKIASVCHEYDVPLLLNGAYSVGRMPVSAKEIGADFIVGSGHKSMAASGPVGVLGVSEEYAPVVFRKSVHNKVKEIELLGCTARGATVMTLMASFPEVVKRTRNWDQEVENARWFSSRLEGMGFIQRGQKPHSHDLMFFEAPGFYEISQKVKNGRYFLYRELKERNIHGIKSGLTKYFKLSTFGLGKEKLGTVADAFEDILKKYENI.

Pyridoxal 5'-phosphate contacts are provided by residues Ala89–Arg90, Asn196, and Ser219–His221. Position 222 is an N6-(pyridoxal phosphate)lysine (Lys222).

This sequence belongs to the SepCysS family. In terms of assembly, homodimer. Interacts with SepRS. Pyridoxal 5'-phosphate serves as cofactor.

It carries out the reaction O-phospho-L-seryl-tRNA(Cys) + hydrogen sulfide + H(+) = L-cysteinyl-tRNA(Cys) + phosphate. Its function is as follows. Converts O-phospho-L-seryl-tRNA(Cys) (Sep-tRNA(Cys)) to L-cysteinyl-tRNA(Cys) (Cys-tRNA(Cys)). This is O-phospho-L-seryl-tRNA:Cys-tRNA synthase from Methanosarcina mazei (strain ATCC BAA-159 / DSM 3647 / Goe1 / Go1 / JCM 11833 / OCM 88) (Methanosarcina frisia).